Consider the following 372-residue polypeptide: sn-glycerol-3-phosphate import ATP-binding protein UgpC (372 aa).

The ABC transporter domain occupies 2-233 (LDIKQLVKTY…PASTFVASFI (232 aa)). 35–42 (GPSGCGKS) contacts ATP.

This sequence belongs to the ABC transporter superfamily. sn-glycerol-3-phosphate importer (TC 3.A.1.1.3) family. The complex is composed of two ATP-binding proteins (UgpC), two transmembrane proteins (UgpA and UgpE) and a solute-binding protein (UgpB).

The protein localises to the cell inner membrane. The enzyme catalyses sn-glycerol 3-phosphate(out) + ATP + H2O = sn-glycerol 3-phosphate(in) + ADP + phosphate + H(+). Its function is as follows. Part of the ABC transporter complex UgpBAEC involved in sn-glycerol-3-phosphate (G3P) import. Responsible for energy coupling to the transport system. In Vibrio cholerae serotype O1 (strain ATCC 39315 / El Tor Inaba N16961), this protein is sn-glycerol-3-phosphate import ATP-binding protein UgpC.